Reading from the N-terminus, the 190-residue chain is Somatotropin (190 aa).

The first 17 residues, 1-17, serve as a signal peptide directing secretion; sequence MNRVILLLSVMCVGVSS. Disulfide bonds link cysteine 69–cysteine 163 and cysteine 180–cysteine 188.

This sequence belongs to the somatotropin/prolactin family.

It is found in the secreted. In terms of biological role, growth hormone plays an important role in growth control and is involved in the regulation of several anabolic processes. Implicated as an osmoregulatory substance important for seawater adaptation. The polypeptide is Somatotropin (gh) (Paralichthys olivaceus (Bastard halibut)).